We begin with the raw amino-acid sequence, 290 residues long: Glycine--tRNA ligase alpha subunit (290 aa).

The protein belongs to the class-II aminoacyl-tRNA synthetase family. Tetramer of two alpha and two beta subunits.

Its subcellular location is the cytoplasm. It catalyses the reaction tRNA(Gly) + glycine + ATP = glycyl-tRNA(Gly) + AMP + diphosphate. The chain is Glycine--tRNA ligase alpha subunit from Maridesulfovibrio salexigens (strain ATCC 14822 / DSM 2638 / NCIMB 8403 / VKM B-1763) (Desulfovibrio salexigens).